Reading from the N-terminus, the 81-residue chain is Serine rich endogenous peptide 21 (81 aa).

The N-terminal stretch at M1 to A40 is a signal peptide. The SCOOP motif signature appears at K65–Q79. A SxS motif essential for MIK2 binding motif is present at residues S71–S73.

Belongs to the serine rich endogenous peptide (SCOOP) phytocytokine family. In terms of assembly, interacts with MIK2 (via extracellular leucine-rich repeat domain); this interaction triggers the formation of complex between MIK2 and the BAK1/SERK3 and SERK4 coreceptors, and subsequent BAK1 activation by phosphorylation.

The protein resides in the cell membrane. It is found in the secreted. The protein localises to the extracellular space. Its subcellular location is the apoplast. In terms of biological role, brassicaceae-specific phytocytokine (plant endogenous peptide released into the apoplast) perceived by MIK2 in a BAK1/SERK3 and SERK4 coreceptors-dependent manner, that modulates various physiological and antimicrobial processes including growth prevention and reactive oxygen species (ROS) response regulation. This chain is Serine rich endogenous peptide 21, found in Arabidopsis thaliana (Mouse-ear cress).